We begin with the raw amino-acid sequence, 190 residues long: CASP-like protein 2U1 (190 aa).

The Cytoplasmic segment spans residues 1–16 (MAFTSLLGSDAERKVA). The chain crosses the membrane as a helical span at residues 17–37 (VAEVALRAVLCGLGALAAALV). Topologically, residues 38 to 59 (ATDTQTRTFFSLQKKATYTDMK) are extracellular. A helical transmembrane segment spans residues 60–80 (AMVLLVAAAAAAAGYSLLQAA). The Cytoplasmic portion of the chain corresponds to 81 to 100 (RCCCCVALLRTSIRPRARLL). Residues 101-121 (LAWCVFACDQALAYALLAAVV) traverse the membrane as a helical segment. The Extracellular segment spans residues 122–152 (AALQASVVAKQGLPQLQWMAICALYGAFCRQ). The chain crosses the membrane as a helical span at residues 153–173 (AGAGVACAVAAAVDAALLAFL). Topologically, residues 174-190 (SAFNLFRLYGAKATTTT) are cytoplasmic.

It belongs to the Casparian strip membrane proteins (CASP) family. In terms of assembly, homodimer and heterodimers.

The protein localises to the cell membrane. The polypeptide is CASP-like protein 2U1 (Zea mays (Maize)).